Consider the following 177-residue polypeptide: MDFSDLDYSDAGDSGWTMYLGHSSSVSLHHFDYHNGETKQEHDEDSSMVSDASSGPPYYCEETVHEDHLQQNTQYWCKSKSKNKNKNKKKVHEEQGYSERFNSSFDDTASSLPVGEEVSAHKQHQNQYQRFHDFCQSYSTRRICKEKVNSGFLQQAFPVDKLALDNQGGDNQRKRRG.

Residues S14–Y19 carry the SOFL-A motif. Disordered regions lie at residues E37–C60 and K78–S104. Residues S47–P56 carry the SOFL-B motif. Positions S79–K90 are enriched in basic residues.

The protein belongs to the SOFL plant protein family. As to expression, expressed in seedlings, flowers and siliques. Barely detectable in roots and leaves.

It is found in the cytoplasm. Its subcellular location is the nucleus. Functionally, involved in cytokinin-mediated development. This chain is Protein SOB FIVE-LIKE 6, found in Arabidopsis thaliana (Mouse-ear cress).